A 310-amino-acid chain; its full sequence is Ribose-phosphate pyrophosphokinase (310 aa).

ATP contacts are provided by residues D33–E35 and R92–Q93. Mg(2+)-binding residues include H127 and D166. K189 is a catalytic residue. Residues R191, D215, and D219 to T223 contribute to the D-ribose 5-phosphate site.

The protein belongs to the ribose-phosphate pyrophosphokinase family. Class I subfamily. As to quaternary structure, homohexamer. The cofactor is Mg(2+).

It localises to the cytoplasm. The enzyme catalyses D-ribose 5-phosphate + ATP = 5-phospho-alpha-D-ribose 1-diphosphate + AMP + H(+). The protein operates within metabolic intermediate biosynthesis; 5-phospho-alpha-D-ribose 1-diphosphate biosynthesis; 5-phospho-alpha-D-ribose 1-diphosphate from D-ribose 5-phosphate (route I): step 1/1. Involved in the biosynthesis of the central metabolite phospho-alpha-D-ribosyl-1-pyrophosphate (PRPP) via the transfer of pyrophosphoryl group from ATP to 1-hydroxyl of ribose-5-phosphate (Rib-5-P). The protein is Ribose-phosphate pyrophosphokinase of Bordetella parapertussis (strain 12822 / ATCC BAA-587 / NCTC 13253).